The following is a 343-amino-acid chain: Homeobox protein DBX1 (343 aa).

Disordered stretches follow at residues 56–100 (RSVP…TAFS) and 240–343 (KERE…ITVS). Residues 181–240 (GMLRRAVFSDVQRKALEKMFQKQKYISKPDRKKLAAKLGLKDSQVKIWFQNRRMKWRNSK) constitute a DNA-binding region (homeobox). Residues 314 to 323 (AHSSSPGKPS) are compositionally biased toward low complexity. Over residues 326-343 (SDSEEEEEGEEQEEITVS) the composition is skewed to acidic residues.

It belongs to the H2.0 homeobox family.

It localises to the nucleus. Functionally, could have a role in patterning the central nervous system during embryogenesis. Has a key role in regulating the distinct phenotypic features that distinguish two major classes of ventral interneurons, V0 and V1 neurons. Regulates the transcription factor profile, neurotransmitter phenotype, intraspinal migratory path and axonal trajectory of V0 neurons, features that differentiate them from an adjacent set of V1 neurons. This chain is Homeobox protein DBX1 (DBX1), found in Homo sapiens (Human).